The chain runs to 236 residues: MFRRRGVTLTKALLTVVCMLAAPLTQAISVGNLTFSLPSETDFVSKRVVNNNKSARIYRIAISAIDSPGSSELRTRPVDGELLFAPRQLALQAGESEYFKFYYHGPRDNRERYYRVSFREVPTRNLTKRSPSGGEVSTEPVVVMDTILVVRPRQVQFKWSFDQVTGTVSNTGNTWFKLLIKPGCDSTEEEGDAWYLRPGDVVHQPELRQPGNHYLVYNDKFIKISDSCPAKPPSAD.

An N-terminal signal peptide occupies residues 1–27 (MFRRRGVTLTKALLTVVCMLAAPLTQA).

Belongs to the EcpB/EcpE family.

Functionally, part of the ecpRABCDE operon, which encodes the E.coli common pilus (ECP). ECP is found in both commensal and pathogenic strains and plays a dual role in early-stage biofilm development and host cell recognition. The chain is Probable fimbrial chaperone EcpE (ecpE) from Escherichia coli O18:K1:H7 (strain IHE3034 / ExPEC).